The chain runs to 325 residues: BES1/BZR1 homolog protein 4 (325 aa).

The segment at 1-21 (MTSGTRMPTWRERENNKRRER) is disordered. A required for DNA-binding region spans residues 6-89 (RMPTWREREN…RMEIGGGSAT (84 aa)). Threonine 169 carries the post-translational modification Phosphothreonine. The segment at 304–325 (ERIHEESGSDDLELTLGNSSTR) is disordered.

The protein belongs to the BZR/LAT61 family. In terms of processing, phosphorylated. Phosphorylation increases protein degradation.

The polypeptide is BES1/BZR1 homolog protein 4 (BEH4) (Arabidopsis thaliana (Mouse-ear cress)).